The sequence spans 860 residues: Nucleolar MIF4G domain-containing protein 1 (860 aa).

Disordered stretches follow at residues 1–172 (MAAS…AARK), 191–211 (RCLG…PLSF), and 226–339 (GKNS…EKYI). A necessary for nucleolar localization and for targeting PPP1CA to the nucleolus region spans residues 1 to 269 (MAASRSAGEA…EEEEEGDVEK (269 aa)). Residues 20–31 (VRMKRRGGRGPR) are compositionally biased toward basic residues. Position 57 is a phosphoserine (Ser57). Residues 77-99 (GGRKSRKELRKEKRHLRKARRLQ) show a composition bias toward basic residues. Over residues 115 to 131 (GAEEASGHRQDTEERAR) the composition is skewed to basic and acidic residues. The residue at position 139 (Ser139) is a Phosphoserine. The segment covering 142-151 (RKPRPSRVKA) has biased composition (basic residues). The span at 152–169 (KATAATAKTRPSAAATAA) shows a compositional bias: low complexity. 2 stretches are compositionally biased toward acidic residues: residues 249–267 (SDLE…EGDV) and 278–293 (AQSE…EQGE). The Required for efficient binding to PPP1CA and for targeting PPP1CA to the nucleolus motif lies at 307–310 (RVRF). Over residues 312–325 (EDEEKSENSSEDGD) the composition is skewed to acidic residues. A phosphoserine mark is found at Ser317, Ser320, and Ser321. The 198-residue stretch at 362 to 559 (KKHVKGLLNR…ETMLALKNND (198 aa)) folds into the MIF4G domain. The MI domain occupies 654 to 770 (DIRRNIFCTI…SLSILKVVEF (117 aa)).

This sequence belongs to the CWC22 family. In terms of assembly, may interact with EIF4A1, EIF4A2 and EIF4A3. Interacts with PPP1CA and PPP1CC. In terms of tissue distribution, expressed in heart and skeletal muscle.

Its subcellular location is the nucleus. It is found in the nucleolus. In terms of biological role, plays a role in targeting PPP1CA to the nucleolus. The polypeptide is Nucleolar MIF4G domain-containing protein 1 (NOM1) (Homo sapiens (Human)).